The chain runs to 347 residues: 2-hydroxyacid dehydrogenase A (347 aa).

NAD(+) contacts are provided by residues 157 to 158, aspartate 177, 234 to 236, and aspartate 260; these read RI and TSR. Arginine 236 is an active-site residue. Residue glutamate 265 is part of the active site.

This sequence belongs to the D-isomer specific 2-hydroxyacid dehydrogenase family.

It catalyses the reaction a (2R)-2-hydroxycarboxylate + NADP(+) = a 2-oxocarboxylate + NADPH + H(+). Its function is as follows. 2-hydroxyacid dehydrogenase that is capable to reduce pyruvate, hydroxypyruvate and glyoxylate in a NADPH- or NADH-dependent manner. In contrast to 2-HadhD/morA, does not recognize 4-methyl-2-oxopentanoate (MOA) as a substrate. This is 2-hydroxyacid dehydrogenase A from Aspergillus oryzae (strain ATCC 42149 / RIB 40) (Yellow koji mold).